Here is a 385-residue protein sequence, read N- to C-terminus: Probable thioesterase PNKD (385 aa).

Residues 32-42 are compositionally biased toward polar residues; the sequence is KASQNRTRALQ. The segment at 32-56 is disordered; it reads KASQNRTRALQSHSSPECKEEPEPL. The residue at position 121 (Val-121) is a Phosphoserine. Positions 172, 174, 176, 177, 229, 253, and 291 each coordinate Zn(2+).

It belongs to the metallo-beta-lactamase superfamily. Glyoxalase II family. As to quaternary structure, isoform 2 interacts with the sarcomeric proteins, MRLC2, MYOM1 and ENO3. The cofactor is Zn(2+). In terms of processing, undergoes cleavage at the N-terminus. As to expression, expressed in many discrete areas of the brain.

It is found in the cell membrane. It localises to the mitochondrion. Its subcellular location is the cytoplasm. The enzyme catalyses a thioester + H2O = a thiol + a carboxylate + H(+). Probable thioesterase that may play a role in cellular detoxification processes; it likely acts on a yet-unknown alpha-hydroxythioester substrate. In vitro, it is able to catalyze the hydrolysis of S-D-lactoyl-glutathione to form glutathione and D-lactic acid at very low rate, though this reaction is not physiologically relevant in vivo. The protein is Probable thioesterase PNKD (Pnkd) of Mus musculus (Mouse).